Here is a 112-residue protein sequence, read N- to C-terminus: Head virion protein G6P (112 aa).

The next 3 helical transmembrane spans lie at 3 to 23 (VLLG…TLFG), 36 to 56 (IAIA…ILVG), and 80 to 100 (NALP…IFDV).

Belongs to the inovirus G6P protein family. Interacts with G3P; this interaction is required for proper integration of G3P and G6P into the virion.

It is found in the virion. The protein localises to the host membrane. Plays essential roles both in the entry of the viral genome into the bacterial host and in budding process. The formation of the G3P-G6P complex termed adsorption complex is essential for correct termination of filamentous phage assembly. This Escherichia coli (Bacteriophage f1) protein is Head virion protein G6P (VI).